Consider the following 249-residue polypeptide: MSKHSHFRDKKMFQKKAEQFKKFQERISVQFQNEKLLYQAFTHSSYVNEHRKKPYEDNERLEFLGDAVLELTISQFLYAKYPAMSEGDLTKLRAAIVCEPSLVSLAHELSFGELVLLGKGEEMTGGRKRPALLADVFEAFIGALYLDQGLEAVVTFLKAYVFPKIDDGAFSHVMDFKSQLQEFVQRDGRGILEYKILQEKGPAHNREFEANVSLKGEVLGVGSGRSKKEAEQHAAQEALAKLQKHHMKQ.

An RNase III domain is found at 20–149; that stretch reads FKKFQERISV…FIGALYLDQG (130 aa). E62 is a Mg(2+) binding site. D66 is a catalytic residue. D135 and E138 together coordinate Mg(2+). The active site involves E138. The 70-residue stretch at 175–244 folds into the DRBM domain; that stretch reads DFKSQLQEFV…AQEALAKLQK (70 aa). Residues 225–249 form a disordered region; the sequence is RSKKEAEQHAAQEALAKLQKHHMKQ.

This sequence belongs to the ribonuclease III family. In terms of assembly, homodimer. Mg(2+) serves as cofactor.

The protein resides in the cytoplasm. It carries out the reaction Endonucleolytic cleavage to 5'-phosphomonoester.. Functionally, digests double-stranded RNA. Involved in the processing of primary rRNA transcript to yield the immediate precursors to the large and small rRNAs (23S and 16S). Processes some mRNAs, and tRNAs when they are encoded in the rRNA operon. Processes pre-crRNA and tracrRNA of type II CRISPR loci if present in the organism. This chain is Ribonuclease 3, found in Bacillus licheniformis (strain ATCC 14580 / DSM 13 / JCM 2505 / CCUG 7422 / NBRC 12200 / NCIMB 9375 / NCTC 10341 / NRRL NRS-1264 / Gibson 46).